The chain runs to 450 residues: UDP-N-acetylmuramoylalanine--D-glutamate ligase (450 aa).

119–125 (GSNGKTT) contacts ATP.

This sequence belongs to the MurCDEF family.

The protein localises to the cytoplasm. The enzyme catalyses UDP-N-acetyl-alpha-D-muramoyl-L-alanine + D-glutamate + ATP = UDP-N-acetyl-alpha-D-muramoyl-L-alanyl-D-glutamate + ADP + phosphate + H(+). Its pathway is cell wall biogenesis; peptidoglycan biosynthesis. Functionally, cell wall formation. Catalyzes the addition of glutamate to the nucleotide precursor UDP-N-acetylmuramoyl-L-alanine (UMA). This Bacillus cereus (strain ATCC 14579 / DSM 31 / CCUG 7414 / JCM 2152 / NBRC 15305 / NCIMB 9373 / NCTC 2599 / NRRL B-3711) protein is UDP-N-acetylmuramoylalanine--D-glutamate ligase.